Here is a 367-residue protein sequence, read N- to C-terminus: Mannan endo-1,4-beta-mannosidase (367 aa).

A signal peptide spans 1 to 17; the sequence is MLLTALAVLFASTGCQA. Substrate contacts are provided by Trp79 and Asn176. Glu177 serves as the catalytic Proton donor. Cys192 and Cys259 are oxidised to a cystine. The substrate site is built by Trp205, Trp240, and Tyr279. Glu308 functions as the Nucleophile in the catalytic mechanism. Residue Trp337 participates in substrate binding.

Monomer. The disulfide bond between Cys-192 and Cys-259 has not been observed in X-ray crystallography. This may be a consequence of the X-ray radiation.

The catalysed reaction is Random hydrolysis of (1-&gt;4)-beta-D-mannosidic linkages in mannans, galactomannans and glucomannans.. Its function is as follows. Hydrolyzes 1,4-beta linked polysaccharide backbones of mannans. Hydrolyzes mannohexaose (M6) preferentially to mannotriose (M4) and less preferentially to mannotetraose (M3), mannopentaose (M5), and mannobiose (M2); hydrolyzes M5 preferentially to M2, and M3, and less preferentially to mannotetraose M4; hydrolyzes M4 preferentially to M3, and less preferentially to mannose (M1), plus very little M2. Does not hydrolyze mannobiose or mannotriose. Does not hydrolyze xlyan, starch, cellulose or galactose. The chain is Mannan endo-1,4-beta-mannosidase from Mytilus edulis (Blue mussel).